Here is a 163-residue protein sequence, read N- to C-terminus: Probable chemoreceptor glutamine deamidase CheD (163 aa).

This sequence belongs to the CheD family.

It catalyses the reaction L-glutaminyl-[protein] + H2O = L-glutamyl-[protein] + NH4(+). In terms of biological role, probably deamidates glutamine residues to glutamate on methyl-accepting chemotaxis receptors (MCPs), playing an important role in chemotaxis. The sequence is that of Probable chemoreceptor glutamine deamidase CheD from Borreliella afzelii (strain PKo) (Borrelia afzelii).